Reading from the N-terminus, the 335-residue chain is Glutaredoxin-3 (335 aa).

Ala-2 is modified (N-acetylalanine). The 116-residue stretch at 2–117 folds into the Thioredoxin domain; sequence AAGAAEAAVA…LTKKVQRHAS (116 aa). Ser-117 and Ser-120 each carry phosphoserine. 2 consecutive Glutaredoxin domains span residues 144-236 and 237-335; these read APCM…PKLE and ERLK…RGEN. The [2Fe-2S] cluster site is built by Cys-159 and Cys-261.

Homodimer; the homodimer is independent of 2Fe-2S clusters. Heterotrimer; forms a heterotrimeric complex composed by two BOLA2 molecules and one GLRX3 molecule; linked by [2Fe-2S] clusters. Interacts (via N-terminus) with PRKCQ/PKC-theta. Interacts (via C-terminus) with CSRP3. Interacts with CSRP2. In terms of tissue distribution, expressed in heart, spleen, testis and, to a lower extent, in thymus and peripheral blood leukocytes. Weakly expressed in lung, placenta, colon and small intestine.

It localises to the cytoplasm. The protein localises to the cytosol. It is found in the cell cortex. Its subcellular location is the myofibril. The protein resides in the sarcomere. It localises to the z line. Its function is as follows. Together with BOLA2, acts as a cytosolic iron-sulfur (Fe-S) cluster assembly factor that facilitates [2Fe-2S] cluster insertion into a subset of cytosolic proteins. Acts as a critical negative regulator of cardiac hypertrophy and a positive inotropic regulator. Required for hemoglobin maturation. Does not possess any thyoredoxin activity since it lacks the conserved motif that is essential for catalytic activity. The chain is Glutaredoxin-3 (GLRX3) from Homo sapiens (Human).